Here is a 69-residue protein sequence, read N- to C-terminus: Guanine nucleotide-binding protein G(I)/G(S)/G(O) subunit gamma-T2 (69 aa).

At C66 the chain carries Cysteine methyl ester. A lipid anchor (S-farnesyl cysteine) is attached at C66. The propeptide at 67-69 (LIS) is removed in mature form.

This sequence belongs to the G protein gamma family. In terms of assembly, g proteins are composed of 3 units, alpha, beta and gamma. As to expression, retinal cones.

It localises to the cell membrane. Its function is as follows. Guanine nucleotide-binding proteins (G proteins) are involved as a modulator or transducer in various transmembrane signaling systems. The beta and gamma chains are required for the GTPase activity, for replacement of GDP by GTP, and for G protein-effector interaction. In Homo sapiens (Human), this protein is Guanine nucleotide-binding protein G(I)/G(S)/G(O) subunit gamma-T2 (GNGT2).